Here is a 290-residue protein sequence, read N- to C-terminus: NAD kinase (290 aa).

The active-site Proton acceptor is Asp-72. NAD(+)-binding positions include 72–73 (DG), 146–147 (NE), Arg-174, Asp-176, and 187–192 (TAYALS).

This sequence belongs to the NAD kinase family. The cofactor is a divalent metal cation.

It localises to the cytoplasm. It carries out the reaction NAD(+) + ATP = ADP + NADP(+) + H(+). In terms of biological role, involved in the regulation of the intracellular balance of NAD and NADP, and is a key enzyme in the biosynthesis of NADP. Catalyzes specifically the phosphorylation on 2'-hydroxyl of the adenosine moiety of NAD to yield NADP. The protein is NAD kinase of Methylococcus capsulatus (strain ATCC 33009 / NCIMB 11132 / Bath).